Consider the following 213-residue polypeptide: Small ribosomal subunit protein uS3 (213 aa).

The 69-residue stretch at 38 to 106 folds into the KH type-2 domain; it reads IREYLENRLS…RVHINIVEIK (69 aa).

The protein belongs to the universal ribosomal protein uS3 family. As to quaternary structure, part of the 30S ribosomal subunit. Forms a tight complex with proteins S10 and S14.

Its function is as follows. Binds the lower part of the 30S subunit head. Binds mRNA in the 70S ribosome, positioning it for translation. This is Small ribosomal subunit protein uS3 from Oceanobacillus iheyensis (strain DSM 14371 / CIP 107618 / JCM 11309 / KCTC 3954 / HTE831).